The following is a 146-amino-acid chain: Large ribosomal subunit protein uL15 (146 aa).

The disordered stretch occupies residues 1-64; that stretch reads MELNSIKPAA…MPMHRRLPKR (64 aa). The segment covering 30-39 has biased composition (basic residues); it reads TATKGHKGQK.

Belongs to the universal ribosomal protein uL15 family. As to quaternary structure, part of the 50S ribosomal subunit.

In terms of biological role, binds to the 23S rRNA. The protein is Large ribosomal subunit protein uL15 of Geotalea daltonii (strain DSM 22248 / JCM 15807 / FRC-32) (Geobacter daltonii).